Consider the following 251-residue polypeptide: Hydroxyacylglutathione hydrolase GloB (251 aa).

6 residues coordinate Zn(2+): H53, H55, D57, H58, H110, and D127. Substrate-binding positions include 136–138, 165–167, and 245–248; these read RLF, HEY, and RSKK. H165 contacts Zn(2+).

It belongs to the metallo-beta-lactamase superfamily. Glyoxalase II family. Monomer. It depends on Zn(2+) as a cofactor.

It catalyses the reaction an S-(2-hydroxyacyl)glutathione + H2O = a 2-hydroxy carboxylate + glutathione + H(+). It carries out the reaction (R)-S-lactoylglutathione + H2O = (R)-lactate + glutathione + H(+). It functions in the pathway secondary metabolite metabolism; methylglyoxal degradation; (R)-lactate from methylglyoxal: step 2/2. Is inhibited by Cu(2+). Type II glyoxalase that catalyzes the hydrolysis of (R)-S-lactoylglutathione to (R)-lactate and glutathione. Is more efficient than the isozyme GloC, and plays a major contribution to methylglyoxal (MG) detoxification in E.coli. The two isoenzymes have additive effects and ensure maximal MG degradation. The protein is Hydroxyacylglutathione hydrolase GloB of Escherichia coli (strain K12).